Here is a 552-residue protein sequence, read N- to C-terminus: FACT complex subunit POB3 (552 aa).

Residues 190–205 (KKEESSNEVVPKKEDG) show a composition bias toward basic and acidic residues. Disordered regions lie at residues 190 to 209 (KKEE…AEGE) and 484 to 552 (QTAL…PKVE). Residues 490–529 (DSDEEDINMGSAGEDDESVDEDFQVSSDNDADEVAEEFDS) show a composition bias toward acidic residues. Residues 541-552 (DEERPSKKPKVE) show a composition bias toward basic and acidic residues.

This sequence belongs to the SSRP1 family. As to quaternary structure, forms a stable heterodimer with SPT16. The SPT16-POB3 dimer weakly associates with multiple molecules of NHP6 (NHP6A or NHP6B) to form the FACT (yFACT or SNP) complex. The FACT complex interacts with the CK2 (casein kinase II) complex subunits CKA1, CKA2, CKB1 and CKB2 and the components of the transcription machinery CHD1, CTR9, PAF1 and CDC73. The FACT complex interacts with the PAF1 complex. SPT16 interacts with SAS3 and POL1. Interacts directly with RFA1.

The protein resides in the nucleus. The protein localises to the chromosome. Functionally, component of the FACT complex, a general chromatin factor that acts to reorganize nucleosomes. The FACT complex is involved in multiple processes that require DNA as a template such as mRNA elongation, DNA replication and DNA repair. During transcription elongation the FACT complex acts as a histone chaperone that both destabilizes and restores nucleosomal structure. It facilitates the passage of RNA polymerase II and transcription by promoting the dissociation of one histone H2A-H2B dimer from the nucleosome, then subsequently promotes the reestablishment of the nucleosome following the passage of RNA polymerase II. Transcription elongation is promoted by the repression of transcription initiation from cryptic sites. Also acts in establishing transcription initiation complexes and promotes SPT15/TBP-binding to a TATA box. Together with replication factor-A protein (RPA), FACT may play a role in nucleosome deposition during DNA replication. This Saccharomyces cerevisiae (strain ATCC 204508 / S288c) (Baker's yeast) protein is FACT complex subunit POB3 (POB3).